The sequence spans 523 residues: Chitinase Chi52 (523 aa).

A signal peptide spans 1–30 (MNQAVRFRPVITFALAFLLLITWFAPRADA). Residues 80–101 (GSGGETPTPDTAPPSVPAGLTS) form a disordered region. One can recognise a Fibronectin type-III domain in the interval 95-180 (VPAGLTSSSI…TSLSVTTSNG (86 aa)). In terms of domain architecture, GH18 spans 190–513 (KWLIGYWHNF…SAHRPFLNGL (324 aa)). The active-site Proton donor is Glu302.

Belongs to the glycosyl hydrolase 18 family. Chitinase class II subfamily.

The enzyme catalyses Random endo-hydrolysis of N-acetyl-beta-D-glucosaminide (1-&gt;4)-beta-linkages in chitin and chitodextrins.. With respect to regulation, activity is inhibited by Cu(2+) and Co(2+), and almost completely inhibited by SDS. In terms of biological role, acidic chitinase that displays a broad substrate specificity, showing the highest specific activity toward colloidal chitin, followed by ethylene glycol chitin and ball milled chitin, but exhibits no activity toward powdery chitin and chitosan. Hydrolyzes colloidal chitin and chitooligosaccharides with degree of polymerization 2-5 to release mainly N-acetyl chitobiose. Displays inhibition effects on the growth of some phytopathogenic fungi, including Alternaria alstroemeriae, Botrytis cinerea, Rhizoctonia solani, Sclerotinia sclerotiorum and Valsa mali. The sequence is that of Chitinase Chi52 from Paenibacillus xylanexedens.